Consider the following 472-residue polypeptide: Protein c-ets-2-B (472 aa).

The PNT domain maps to 85 to 170 (DTFNGFAKER…EHLEEMMKEY (86 aa)). The ETS DNA-binding region spans 366 to 446 (IQLWQFLLEL…SGKRYVYRFV (81 aa)).

Belongs to the ETS family.

The protein resides in the nucleus. In terms of biological role, probable transcription factor. This is Protein c-ets-2-B (ets2-b) from Xenopus laevis (African clawed frog).